The following is a 216-amino-acid chain: Type-4 uracil-DNA glycosylase (216 aa).

The [4Fe-4S] cluster site is built by C14 and C17. Uracil is bound by residues 41–43, F55, and N82; that span reads GEA. C86 and C102 together coordinate [4Fe-4S] cluster. H164 is a uracil binding site.

This sequence belongs to the uracil-DNA glycosylase (UDG) superfamily. Type 4 (UDGa) family. Interacts with the sliding clamp PCNA3 subunit.

The catalysed reaction is Hydrolyzes single-stranded DNA or mismatched double-stranded DNA and polynucleotides, releasing free uracil.. In terms of biological role, removes uracil bases that are present in DNA as a result of either deamination of cytosine or misincorporation of dUMP instead of dTMP. Can remove uracil from double-stranded DNA containing either a U/G or U/A base pair as well as from single-stranded DNA. This Saccharolobus solfataricus (strain ATCC 35092 / DSM 1617 / JCM 11322 / P2) (Sulfolobus solfataricus) protein is Type-4 uracil-DNA glycosylase.